Reading from the N-terminus, the 125-residue chain is Mite group 2 allergen Gly d 2.02 (125 aa).

Belongs to the NPC2 family.

It localises to the secreted. In Glycyphagus domesticus (House itch mite), this protein is Mite group 2 allergen Gly d 2.02.